We begin with the raw amino-acid sequence, 446 residues long: SPARC-related modular calcium-binding protein 2 (446 aa).

Positions 1 to 21 (MLLPQLCWLPLLAGLLPPVPA) are cleaved as a signal peptide. Residues 34–86 (QDKDKDCSLDCAGSPQKPLCASDGRTFLSRCEFQRAKCKDPQLEIAYRGNCKD) enclose the Kazal-like domain. Intrachain disulfides connect Cys40/Cys71, Cys44/Cys64, Cys53/Cys84, Cys90/Cys113, Cys124/Cys131, and Cys133/Cys153. Positions 87–153 (VSRCVAERKY…TAVAHKTPRC (67 aa)) constitute a Thyroglobulin type-1 1 domain. Positions 147–228 (AHKTPRCPGS…EHQSALEEAK (82 aa)) are disordered. A compositionally biased stretch (basic and acidic residues) spans 161–172 (LPQREGTGKTDD). Asn206 carries an N-linked (GlcNAc...) asparagine glycan. Over residues 206 to 216 (NKTNKNSVSSC) the composition is skewed to polar residues. In terms of domain architecture, Thyroglobulin type-1 2 spans 213–281 (VSSCDQEHQS…TSTRYEQPKC (69 aa)). 3 disulfides stabilise this stretch: Cys216–Cys240, Cys251–Cys258, and Cys260–Cys281. Over residues 217–228 (DQEHQSALEEAK) the composition is skewed to basic and acidic residues. EF-hand domains lie at 347–382 (LEER…LRKK) and 384–419 (KPKK…AKED). Positions 360, 362, 364, 366, 371, 397, 399, 401, 403, and 408 each coordinate Ca(2+). The N-linked (GlcNAc...) asparagine glycan is linked to Asn362. A disordered region spans residues 416–446 (AKEDGKADTKKRHTPRGHAESTSNRQPRKQG).

Binds various proteins from the extracellular matrix.

It is found in the secreted. It localises to the extracellular space. The protein localises to the extracellular matrix. The protein resides in the basement membrane. In terms of biological role, promotes matrix assembly and cell adhesiveness. Can stimulate endothelial cell proliferation, migration, as well as angiogenesis. The chain is SPARC-related modular calcium-binding protein 2 (SMOC2) from Homo sapiens (Human).